The sequence spans 309 residues: Porphobilinogen deaminase (309 aa).

Residue cysteine 241 is modified to S-(dipyrrolylmethanemethyl)cysteine.

Belongs to the HMBS family. Monomer. Dipyrromethane serves as cofactor.

It carries out the reaction 4 porphobilinogen + H2O = hydroxymethylbilane + 4 NH4(+). The protein operates within porphyrin-containing compound metabolism; protoporphyrin-IX biosynthesis; coproporphyrinogen-III from 5-aminolevulinate: step 2/4. Tetrapolymerization of the monopyrrole PBG into the hydroxymethylbilane pre-uroporphyrinogen in several discrete steps. This Desulforudis audaxviator (strain MP104C) protein is Porphobilinogen deaminase.